The sequence spans 96 residues: Co-chaperonin GroES (96 aa).

The protein belongs to the GroES chaperonin family. Heptamer of 7 subunits arranged in a ring. Interacts with the chaperonin GroEL.

It is found in the cytoplasm. Together with the chaperonin GroEL, plays an essential role in assisting protein folding. The GroEL-GroES system forms a nano-cage that allows encapsulation of the non-native substrate proteins and provides a physical environment optimized to promote and accelerate protein folding. GroES binds to the apical surface of the GroEL ring, thereby capping the opening of the GroEL channel. The polypeptide is Co-chaperonin GroES (Leptospira borgpetersenii serovar Hardjo-bovis (strain JB197)).